A 193-amino-acid polypeptide reads, in one-letter code: MIRVGVLDLQGSVVEHMKILEKIDNVEPVRVKYKEDLDNIQGIILPGGESTTLGKLLKDFHIHDTLKEKIENGLPVWGTCAGMILLAKDIQGQEESYFKVIDIEVKRNAYGSQLNSFSIEEMLEDIDKEPIELVFIRAPYITTVGPNVTILKRVRKNIVAAKEKNVLVTSFHPELTEDTRFHRYFIDKFIKNK.

Position 48–50 (48–50 (GES)) interacts with L-glutamine. Residue cysteine 80 is the Nucleophile of the active site. Residues arginine 107 and 136 to 137 (IR) contribute to the L-glutamine site. Residues histidine 172 and glutamate 174 each act as charge relay system in the active site.

The protein belongs to the glutaminase PdxT/SNO family. As to quaternary structure, in the presence of PdxS, forms a dodecamer of heterodimers. Only shows activity in the heterodimer.

It catalyses the reaction aldehydo-D-ribose 5-phosphate + D-glyceraldehyde 3-phosphate + L-glutamine = pyridoxal 5'-phosphate + L-glutamate + phosphate + 3 H2O + H(+). It carries out the reaction L-glutamine + H2O = L-glutamate + NH4(+). It participates in cofactor biosynthesis; pyridoxal 5'-phosphate biosynthesis. Functionally, catalyzes the hydrolysis of glutamine to glutamate and ammonia as part of the biosynthesis of pyridoxal 5'-phosphate. The resulting ammonia molecule is channeled to the active site of PdxS. The protein is Pyridoxal 5'-phosphate synthase subunit PdxT of Clostridium botulinum (strain Loch Maree / Type A3).